The sequence spans 9904 residues: Extracellular matrix-binding protein ebh (9904 aa).

The N-terminal stretch at 1-39 (MNYRDKIQKFSIRKYTVGTFSTVIATLVFLGFNTSQAHA) is a signal peptide. The segment covering 41-59 (ETNQPASVVKQKQQSNNEQ) has biased composition (polar residues). 2 disordered regions span residues 41–153 (ETNQ…NDNR) and 250–277 (PQRQ…PRSV). Residues 65-78 (SQVQNSQNSQNSQS) are compositionally biased toward low complexity. A compositionally biased stretch (polar residues) spans 79-117 (LSATHENEQPNISQANLVDQKVAQSSTTNDEQPASQNVN). The span at 130–140 (PDKEEGKHKQN) shows a compositional bias: basic and acidic residues. Polar residues-rich tracts occupy residues 141 to 151 (ESQSANKNGND) and 250 to 266 (PQRQ…QTRS). FIVAR domains are found at residues 2524–2580 (AKNH…VSDA), 2610–2666 (SKNN…ISEE), 2687–2750 (DTHT…VQTA), 2780–2836 (AKTK…IAEE), 2864–2919 (AKTQ…IRQN), 2947–3002 (AKNQ…INTN), 3030–3085 (AKTQ…INDK), 3154–3212 (AMTK…VNQK), 3280–3339 (AMTG…VNNA), 3407–3465 (AMGN…VNRA), 3533–3591 (AMGN…VTEA), 3659–3717 (AMNT…ITQK), 3785–3843 (AMAS…VEAA), 3911–3969 (AMGN…VEQA), 4037–4095 (AMGT…VTAA), 4160–4208 (DKDA…VDNA), 4276–4334 (AMGA…INGM), 4402–4460 (AMTA…VNSA), 4528–4586 (AMKG…ITQA), 4654–4712 (AMHS…VEQA), 4780–4838 (AMGQ…VERA), 4906–4964 (AMTA…VTNA), 5032–5090 (AMKG…INQA), 5158–5216 (AMTN…VESA), 5284–5342 (AMSN…VEQA), 5410–5468 (AMNQ…INQK), 5536–5593 (AMGN…VQAA), 5661–5719 (AMGQ…VEAA), 5787–5845 (AMQR…VEQA), 5913–5971 (AMDQ…VTAA), 6039–6097 (AMNQ…VTQA), 6175–6223 (DKDQ…VEAA), 6291–6349 (AMGN…VEAA), 6417–6475 (AMDK…INQA), 6543–6601 (AMGN…VEQA), 6669–6727 (AMTQ…ITAA), 6795–6853 (AMTQ…IQQA), 6921–6979 (AMTN…VEQA), 7047–7105 (AMTQ…VAQA), 7173–7231 (AMGT…VTQA), 7299–7357 (AMGN…ITRA), 7425–7486 (AMDQ…ITNE), 7551–7609 (AMEL…VNGA), 7677–7735 (AMGN…VEQA), 7803–7860 (AMHG…INQA), 7928–7986 (LMDA…VSSA), 8054–8112 (AIKA…IDQA), 8180–8238 (AMEA…VEQL), 8306–8364 (AMQA…VEQL), 8432–8490 (AMET…VEQA), 8558–8612 (SMDQ…VDQA), 8680–8739 (AMDQ…VIKL), and 8934–8990 (AMET…INGA). Residues 9710-9730 (IKNAIGVVGISGLLASFWFFI) traverse the membrane as a helical segment. A disordered region spans residues 9807 to 9904 (RRKEDEEDVE…KKKKSKKNKK (98 aa)). 2 stretches are compositionally biased toward basic and acidic residues: residues 9822–9832 (TDEKVLKDNEH) and 9871–9881 (QKDNQSKDKKS). Over residues 9886–9904 (TSKKVAAKKKKKKSKKNKK) the composition is skewed to basic residues.

The protein localises to the cell membrane. The chain is Extracellular matrix-binding protein ebh (ebh) from Staphylococcus aureus (strain MW2).